The primary structure comprises 507 residues: Solute carrier family 2, facilitated glucose transporter member 6 (507 aa).

The disordered stretch occupies residues 1–28 (MQEPLLGAEGPDYDTFPEKPPPSPGDRA). Over 1 to 37 (MQEPLLGAEGPDYDTFPEKPPPSPGDRARVGTLQNKR) the chain is Cytoplasmic. The Dileucine internalization motif signature appears at 5–6 (LL). Ser23 is subject to Phosphoserine. A helical transmembrane segment spans residues 38–58 (VFLATFAAVLGNFSFGYALVY). At 59-81 (TSPVIPALERSLDPDLHLTKSQA) the chain is on the extracellular side. The chain crosses the membrane as a helical span at residues 82–102 (SWFGSVFTLGAAAGGLSAMIL). Residues 103-111 (NDLLGRKLS) lie on the Cytoplasmic side of the membrane. A helical transmembrane segment spans residues 112–132 (IMFSAVPSAAGYALMAGAHGL). Topologically, residues 133–140 (WMLLLGRT) are extracellular. The chain crosses the membrane as a helical span at residues 141–161 (LTGFAGGLTAACIPVYVSEIA). At 162–168 (PPGVRGA) the chain is on the cytoplasmic side. A helical membrane pass occupies residues 169-189 (LGATPQLMAVFGSLSLYALGL). Gln174 serves as a coordination point for a D-hexose. Residues 190-194 (LLPWR) are Extracellular-facing. Residues 195 to 215 (WLAVAGEAPVLIMILLLSFMP) traverse the membrane as a helical segment. Residues 216–289 (NSPRFLLSRG…LLMRLLQQLT (74 aa)) lie on the Cytoplasmic side of the membrane. Position 286–287 (286–287 (QQ)) interacts with a D-hexose. Residues 290–310 (GITPILVYLQSIFDSTAVLLP) form a helical membrane-spanning segment. The Extracellular portion of the chain corresponds to 311-314 (PKDD). A helical transmembrane segment spans residues 315 to 335 (AAIVGAVRLLSVLIAALTMDL). Residues 336–339 (AGRK) lie on the Cytoplasmic side of the membrane. Residues 340–360 (VLLFVSAAIMFAANLTLGLYI) traverse the membrane as a helical segment. At 361–395 (HFGPRPLSPNSTAGLESESWGDLAQPLAAPAGYLT) the chain is on the extracellular side. The N-linked (GlcNAc...) asparagine glycan is linked to Asn370. The chain crosses the membrane as a helical span at residues 396 to 416 (LVPLLATMLFIMGYAVGWGPI). At 417-435 (TWLLMSEVLPLRARGVASG) the chain is on the cytoplasmic side. Trp418 is a binding site for a D-hexose. A helical transmembrane segment spans residues 436-456 (LCVLASWLTAFVLTKSFLPVV). The Extracellular segment spans residues 457–462 (STFGLQ). Residues 463–483 (VPFFFFAAICLVSLVFTGCCV) form a helical membrane-spanning segment. Topologically, residues 484–507 (PETKGRSLEQIESFFRTGRRSFLR) are cytoplasmic.

This sequence belongs to the major facilitator superfamily. Sugar transporter (TC 2.A.1.1) family. Glucose transporter subfamily. As to expression, highly expressed in brain, spleen and peripheral blood leukocytes.

The protein localises to the lysosome membrane. Functionally, probable sugar transporter that acts as a regulator of glycolysis in macrophages. Does not transport glucose. This Homo sapiens (Human) protein is Solute carrier family 2, facilitated glucose transporter member 6.